Here is a 642-residue protein sequence, read N- to C-terminus: Stress-activated map kinase-interacting protein 1 homolog (642 aa).

The CRIM domain occupies 189-314 (ARIREVIGYC…EREPLFQGLL (126 aa)). Positions 603 to 642 (IVSPSSDAPSRSSNGKNGGKFRKMSSLMASVMGRRKSDSK) are disordered. Low complexity predominate over residues 605–615 (SPSSDAPSRSS).

It belongs to the SIN1 family. In terms of assembly, component of the target of rapamycin complex 2 (TORC2).

Its function is as follows. Component of the target of rapamycin complex 2 (TORC2), which transduces signals from growth factors to pathways involved in proliferation, cytoskeletal organization and anabolic output. In response to growth factors, TORC2 phosphorylates and activates AGC protein kinase family members, such as Akt1. Within the TORC2 complex, sinh-1 acts as a substrate adapter which recognizes and binds AGC protein kinase family members for phosphorylation by mTor. In Caenorhabditis elegans, this protein is Stress-activated map kinase-interacting protein 1 homolog (sinh-1).